Consider the following 654-residue polypeptide: WD repeat-containing protein 70 (654 aa).

Disordered stretches follow at residues 1–26 (MERS…VTMG) and 43–175 (FEQT…DSHE). A compositionally biased stretch (basic and acidic residues) spans 45–78 (QTRRTAVERSRKTLEAREKEEEMNREKELRRQNE). The segment covering 99–111 (RDTSSSESEQSSD) has biased composition (low complexity). The span at 147–164 (NEEEEEAEEEEEEEEEEE) shows a compositional bias: acidic residues. The span at 165–175 (NPVHKIPDSHE) shows a compositional bias: basic and acidic residues. WD repeat units lie at residues 180–219 (HGTK…ASFK), 227–268 (CECH…ECIK), 281–321 (GHTA…KQKS), 330–369 (GKKV…HPKF), 376–415 (DSGT…KPLF), 421–466 (PTMF…RVYE), and 469–508 (ITDA…QRGA). A Glycyl lysine isopeptide (Lys-Gly) (interchain with G-Cter in SUMO2) cross-link involves residue lysine 296. Position 452 is an N6-acetyllysine (lysine 452). A compositionally biased stretch (basic and acidic residues) spans 540-565 (REPRQRSTRKQLEKDRLDPLKSHKPE). The segment at 540-579 (REPRQRSTRKQLEKDRLDPLKSHKPEPPVAGPGRGGRVGT) is disordered. Phosphothreonine is present on threonine 579. Residues lysine 590 and lysine 596 each participate in a glycyl lysine isopeptide (Lys-Gly) (interchain with G-Cter in SUMO2) cross-link. A phosphoserine mark is found at serine 621 and serine 638. Positions 630 to 654 (KTMFAQVESDDEEAKNEPEWKKRKI) are disordered. Over residues 644 to 654 (KNEPEWKKRKI) the composition is skewed to basic and acidic residues.

This sequence belongs to the WD repeat GAD-1 family.

This Homo sapiens (Human) protein is WD repeat-containing protein 70 (WDR70).